The following is a 307-amino-acid chain: F-box protein At2g23160 (307 aa).

The F-box domain maps to 2–49; the sequence is NSSSPISIDLIAEILSRVPSKSVARFRCVSKPWASMIRRPYFTELFLT.

The protein is F-box protein At2g23160 of Arabidopsis thaliana (Mouse-ear cress).